A 365-amino-acid chain; its full sequence is Zinc finger TRAF-type-containing protein 1-A (365 aa).

Positions 1 to 56 are disordered; sequence MSEEREAPGPLASSSAGLGAEVGQEEVPGGAGPARLLLLPSDSDGPPKKRLRSEAE. The RING-type; degenerate zinc-finger motif lies at 72-117; sequence CTVCLDLPKASVYQCTNGHLMCAGCFIHLLADSRLKEEQATCPNCR. A TRAF-type zinc finger spans residues 113–186; sequence CPNCRCEISK…PWEGPYHELT (74 aa).

It belongs to the ZFTRAF1 family.

The protein resides in the cytoplasm. This Xenopus laevis (African clawed frog) protein is Zinc finger TRAF-type-containing protein 1-A.